Consider the following 443-residue polypeptide: Protein king tubby (443 aa).

Disordered stretches follow at residues 57–85 (TNGS…LSTI) and 98–189 (HELE…ESEG). Residues 68–85 (AVNTSRNHSNNMRSLSTI) are compositionally biased toward polar residues. Over residues 113 to 128 (QHQQSASHSANSTQSQ) the composition is skewed to low complexity. Phosphoserine is present on S136. The segment covering 148 to 160 (NRNVAAAAPVRPA) has biased composition (low complexity). Residues 177–186 (NGTGNGTGGE) show a composition bias toward gly residues.

The protein belongs to the TUB family.

It is found in the cytoplasm. The protein resides in the nucleus. The protein localises to the cell projection. It localises to the cilium membrane. Its subcellular location is the rhabdomere. This is Protein king tubby from Drosophila yakuba (Fruit fly).